We begin with the raw amino-acid sequence, 176 residues long: MLRFLNQCSQGRGAWLLMAFTALALELTALWFQHVMLLKPCVLCIYERCALFGVLGAALIGAIAPKTPLRYVAMVIWLYSAFRGVQLTYEHTMLQLYPSPFATCDFMVRFPEWLPLDKWVPQVFVASGDCAERQWDFLGLEMPQWLLGIFIAYLIVAVLVMISQPFKAKKRDLFGR.

Residues 1–14 lie on the Cytoplasmic side of the membrane; that stretch reads MLRFLNQCSQGRGA. The helical transmembrane segment at 15–31 threads the bilayer; it reads WLLMAFTALALELTALW. Over 32–49 the chain is Periplasmic; it reads FQHVMLLKPCVLCIYERC. Cys-41 and Cys-44 are oxidised to a cystine. The chain crosses the membrane as a helical span at residues 50 to 65; that stretch reads ALFGVLGAALIGAIAP. Residues 66 to 71 are Cytoplasmic-facing; it reads KTPLRY. The chain crosses the membrane as a helical span at residues 72-89; the sequence is VAMVIWLYSAFRGVQLTY. Topologically, residues 90–144 are periplasmic; sequence EHTMLQLYPSPFATCDFMVRFPEWLPLDKWVPQVFVASGDCAERQWDFLGLEMPQ. The cysteines at positions 104 and 130 are disulfide-linked. Residues 145–163 form a helical membrane-spanning segment; it reads WLLGIFIAYLIVAVLVMIS. The Cytoplasmic segment spans residues 164–176; it reads QPFKAKKRDLFGR.

The protein belongs to the DsbB family.

It is found in the cell inner membrane. Its function is as follows. Required for disulfide bond formation in some periplasmic proteins. Acts by oxidizing the DsbA protein. This Shigella sonnei (strain Ss046) protein is Disulfide bond formation protein B.